A 222-amino-acid chain; its full sequence is uncharacterized protein (222 aa).

A run of 4 helical transmembrane segments spans residues 23 to 43 (FFAA…TGLL), 67 to 87 (IWVL…IGYL), 157 to 177 (IVGG…LGNV), and 187 to 207 (IILG…WHGY).

This sequence belongs to the DedA family.

The protein localises to the cell membrane. This is an uncharacterized protein from Mycobacterium leprae (strain TN).